The primary structure comprises 341 residues: Phosphoribosylformylglycinamidine cyclo-ligase (341 aa).

The protein belongs to the AIR synthase family.

Its subcellular location is the cytoplasm. It catalyses the reaction 2-formamido-N(1)-(5-O-phospho-beta-D-ribosyl)acetamidine + ATP = 5-amino-1-(5-phospho-beta-D-ribosyl)imidazole + ADP + phosphate + H(+). It participates in purine metabolism; IMP biosynthesis via de novo pathway; 5-amino-1-(5-phospho-D-ribosyl)imidazole from N(2)-formyl-N(1)-(5-phospho-D-ribosyl)glycinamide: step 2/2. The sequence is that of Phosphoribosylformylglycinamidine cyclo-ligase from Caldicellulosiruptor bescii (strain ATCC BAA-1888 / DSM 6725 / KCTC 15123 / Z-1320) (Anaerocellum thermophilum).